The primary structure comprises 590 residues: Aspartate--tRNA(Asp/Asn) ligase (590 aa).

An L-aspartate-binding site is contributed by glutamate 175. The segment at 199 to 202 (QQYK) is aspartate. Arginine 221 and histidine 450 together coordinate L-aspartate. 221 to 223 (RDE) provides a ligand contact to ATP. Glutamate 484 is a binding site for ATP. L-aspartate is bound at residue arginine 491. 536–539 (GVDR) serves as a coordination point for ATP.

The protein belongs to the class-II aminoacyl-tRNA synthetase family. Type 1 subfamily. Homodimer.

The protein resides in the cytoplasm. It carries out the reaction tRNA(Asx) + L-aspartate + ATP = L-aspartyl-tRNA(Asx) + AMP + diphosphate. Functionally, aspartyl-tRNA synthetase with relaxed tRNA specificity since it is able to aspartylate not only its cognate tRNA(Asp) but also tRNA(Asn). Reaction proceeds in two steps: L-aspartate is first activated by ATP to form Asp-AMP and then transferred to the acceptor end of tRNA(Asp/Asn). In Rhodopseudomonas palustris (strain BisB18), this protein is Aspartate--tRNA(Asp/Asn) ligase.